The chain runs to 424 residues: Dihydroorotase (424 aa).

Residues His61 and His63 each contribute to the Zn(2+) site. Residues 63–65 and Asn95 contribute to the substrate site; that span reads HLR. Asp153, His180, and His233 together coordinate Zn(2+). Asn279 serves as a coordination point for substrate. Residue Asp306 coordinates Zn(2+). The active site involves Asp306. A substrate-binding site is contributed by His310.

This sequence belongs to the metallo-dependent hydrolases superfamily. DHOase family. Class I DHOase subfamily. It depends on Zn(2+) as a cofactor.

It carries out the reaction (S)-dihydroorotate + H2O = N-carbamoyl-L-aspartate + H(+). Its pathway is pyrimidine metabolism; UMP biosynthesis via de novo pathway; (S)-dihydroorotate from bicarbonate: step 3/3. Its function is as follows. Catalyzes the reversible cyclization of carbamoyl aspartate to dihydroorotate. The protein is Dihydroorotase of Citrifermentans bemidjiense (strain ATCC BAA-1014 / DSM 16622 / JCM 12645 / Bem) (Geobacter bemidjiensis).